The primary structure comprises 526 residues: ESX-1 secretion-associated protein EspB (526 aa).

The span at 1–23 (MSEELKYELPGLERKAHECESTR) shows a compositional bias: basic and acidic residues. Disordered regions lie at residues 1-35 (MSEELKYELPGLERKAHECESTRPEGPGDATKPDE), 91-110 (RQMNGSDAPPPAAEAVVPDM), and 271-526 (QIQE…GKQQ). The span at 303-328 (GGPGGPGSGSGGGSGGGASGGSGGGT) shows a compositional bias: gly residues. The span at 335–362 (PSTDPSMSPMSTNSAGEEQSSGSPSSGG) shows a compositional bias: low complexity. The span at 363–387 (SSSGGSPSGGSPSGGGAPSSGGMPE) shows a compositional bias: gly residues. Positions 393-405 (DMPGGPDIPGLDD) are enriched in low complexity. Residues 413-429 (AGGGGGGGVGGGGGGGM) show a composition bias toward gly residues. The segment covering 430 to 440 (PAAPLGPAVGA) has biased composition (low complexity). Over residues 451–484 (RGGGVGVPTGTGGGAGGMMGGGMGGMGAGHGQGQ) the composition is skewed to gly residues. A compositionally biased stretch (basic and acidic residues) spans 485–508 (GKEKKRDPKLAPDEDLYTEDRAHS).

This sequence belongs to the EspB family.

It localises to the secreted. Its function is as follows. Involved in DNA conjugation, at least in the recipient strain. In Mycolicibacterium smegmatis (strain MKD8) (Mycobacterium smegmatis), this protein is ESX-1 secretion-associated protein EspB.